A 319-amino-acid chain; its full sequence is Ribonuclease Z (319 aa).

Histidine 62, histidine 64, aspartate 66, histidine 67, histidine 145, aspartate 216, and histidine 274 together coordinate Zn(2+). Catalysis depends on aspartate 66, which acts as the Proton acceptor.

Belongs to the RNase Z family. Homodimer. Requires Zn(2+) as cofactor.

The catalysed reaction is Endonucleolytic cleavage of RNA, removing extra 3' nucleotides from tRNA precursor, generating 3' termini of tRNAs. A 3'-hydroxy group is left at the tRNA terminus and a 5'-phosphoryl group is left at the trailer molecule.. In terms of biological role, zinc phosphodiesterase, which displays some tRNA 3'-processing endonuclease activity. Probably involved in tRNA maturation, by removing a 3'-trailer from precursor tRNA. In Synechococcus sp. (strain CC9605), this protein is Ribonuclease Z.